The sequence spans 416 residues: Serine hydroxymethyltransferase (416 aa).

(6S)-5,6,7,8-tetrahydrofolate-binding positions include L121 and 125-127 (GHL). Position 230 is an N6-(pyridoxal phosphate)lysine (K230).

It belongs to the SHMT family. In terms of assembly, homodimer. Requires pyridoxal 5'-phosphate as cofactor.

Its subcellular location is the cytoplasm. The enzyme catalyses (6R)-5,10-methylene-5,6,7,8-tetrahydrofolate + glycine + H2O = (6S)-5,6,7,8-tetrahydrofolate + L-serine. It functions in the pathway one-carbon metabolism; tetrahydrofolate interconversion. Its pathway is amino-acid biosynthesis; glycine biosynthesis; glycine from L-serine: step 1/1. Catalyzes the reversible interconversion of serine and glycine with tetrahydrofolate (THF) serving as the one-carbon carrier. This reaction serves as the major source of one-carbon groups required for the biosynthesis of purines, thymidylate, methionine, and other important biomolecules. Also exhibits THF-independent aldolase activity toward beta-hydroxyamino acids, producing glycine and aldehydes, via a retro-aldol mechanism. This is Serine hydroxymethyltransferase from Nitrosomonas eutropha (strain DSM 101675 / C91 / Nm57).